Reading from the N-terminus, the 914-residue chain is Scaffold attachment factor B1 (914 aa).

A compositionally biased stretch (low complexity) spans 1–24 (MAETLSGLGDSGAAGAAALSSASS). The disordered stretch occupies residues 1-33 (MAETLSGLGDSGAAGAAALSSASSETGTRRLSD). The residue at position 2 (Ala-2) is an N-acetylalanine. Phosphoserine occurs at positions 24 and 55. The SAP domain maps to 31 to 65 (LSDLRVIDLRAELRKRNVDSSGNKSVLMERLKKAI). The disordered stretch occupies residues 64–117 (AIEDEGGNPDEIEITSEGNKKTSKRSSKGRKPEEEGVEDNGLEENSGDGQEDVE). Acidic residues predominate over residues 67-77 (DEGGNPDEIEI). Ser-79 carries the phosphoserine modification. A compositionally biased stretch (acidic residues) spans 98-117 (EGVEDNGLEENSGDGQEDVE). Residues Lys-172 and Lys-186 each participate in a glycyl lysine isopeptide (Lys-Gly) (interchain with G-Cter in SUMO2) cross-link. A Phosphothreonine modification is found at Thr-188. 3 positions are modified to phosphoserine: Ser-195, Ser-197, and Ser-209. Positions 221-407 (LGETCKSEPV…EKGRSSCGRN (187 aa)) are disordered. Residues 225 to 234 (CKSEPVKEES) are compositionally biased toward basic and acidic residues. Lys-231 is covalently cross-linked (Glycyl lysine isopeptide (Lys-Gly) (interchain with G-Cter in SUMO)). A compositionally biased stretch (polar residues) spans 275-286 (SESTAHAQSSKA). Positions 293–309 (VKREPAEQPGDGERTDC) are enriched in basic and acidic residues. A Glycyl lysine isopeptide (Lys-Gly) (interchain with G-Cter in SUMO) cross-link involves residue Lys-294. A compositionally biased stretch (low complexity) spans 319–330 (EQSSAASELAEA). Residues 346 to 359 (EARDSKEDGRKFDF) show a composition bias toward basic and acidic residues. The segment covering 371–383 (ESSTSEGADQKMS) has biased composition (polar residues). Lys-381 participates in a covalent cross-link: Glycyl lysine isopeptide (Lys-Gly) (interchain with G-Cter in SUMO2). Phosphoserine occurs at positions 383 and 384. Positions 390–401 (DTKRLSKEEKGR) are enriched in basic and acidic residues. Residue Lys-392 forms a Glycyl lysine isopeptide (Lys-Gly) (interchain with G-Cter in SUMO2) linkage. Positions 406–484 (RNFWVSGLSS…KMISVEKAKN (79 aa)) constitute an RRM domain. Ser-415 is modified (phosphoserine). Composition is skewed to basic and acidic residues over residues 477-551 (ISVE…ERSR) and 559-570 (GTERTVVMDKSK). Disordered stretches follow at residues 477–636 (ISVE…QAQW), 670–706 (RERM…QERR), and 748–914 (FDHR…TRRY). Glycyl lysine isopeptide (Lys-Gly) (interchain with G-Cter in SUMO2) cross-links involve residues Lys-483, Lys-514, Lys-543, and Lys-570. The segment at 528-791 (GDDGSGEKSK…RHGGPERHGR (264 aa)) is interaction with POLR2A; SFRS1; SFRS9 and SFRS10. Lys-578 participates in a covalent cross-link: Glycyl lysine isopeptide (Lys-Gly) (interchain with G-Cter in SUMO1); alternate. A Glycyl lysine isopeptide (Lys-Gly) (interchain with G-Cter in SUMO2); alternate cross-link involves residue Lys-578. A phosphoserine mark is found at Ser-580, Ser-582, Ser-601, and Ser-604. The segment covering 581 to 636 (GSKERASKSLDRKSASREKRSVVSFDKVKEPRKSRDSESHRVRERSEREQRMQAQW) has biased composition (basic and acidic residues). The short motif at 599–616 (KRSVVSFDKVKEPRKSRD) is the Nuclear localization signal element. The segment at 599–914 (KRSVVSFDKV…PSDARFTRRY (316 aa)) is interaction with SAFB2. At Lys-607 the chain carries N6-acetyllysine. Basic and acidic residues predominate over residues 748 to 795 (FDHRDRGRYPDHSVDRREGSRSMMGEREGQHYPERHGGPERHGRDSRD). An Omega-N-methylarginine modification is found at Arg-810. Composition is skewed to basic and acidic residues over residues 816–831 (PRRD…DDRA) and 840–850 (MMDRDHKRWQG). Lys-846 is covalently cross-linked (Glycyl lysine isopeptide (Lys-Gly) (interchain with G-Cter in SUMO2)). Asymmetric dimethylarginine occurs at positions 867, 873, and 883. The segment covering 891–900 (GMQGGFGGQS) has biased composition (gly residues). Over residues 904–914 (RPSDARFTRRY) the composition is skewed to basic and acidic residues.

As to quaternary structure, monomer and homodimer. Interacts with KHDRBS3. Interacts with CLK2. Interacts with POLR2A, ASF/SRSF1, SRp30c/SRFS9 and TRA2B/SFRS10. Interacts with SRPK1 and inhibits its activity. Interacts with RBMX. Interacts with FUS. Interacts with ZBED4. In terms of processing, sumoylated by PIAS1 with SUMO1 and SUMO2/3, desumoylated by SENP1. Sumoylation is required for transcriptional repressor activity.

The protein resides in the nucleus. In terms of biological role, binds to scaffold/matrix attachment region (S/MAR) DNA and forms a molecular assembly point to allow the formation of a 'transcriptosomal' complex (consisting of SR proteins and RNA polymerase II) coupling transcription and RNA processing. Functions as an estrogen receptor corepressor and can also bind to the HSP27 promoter and decrease its transcription. Thereby acts as a negative regulator of cell proliferation. When associated with RBMX, binds to and stimulates transcription from the SREBF1 promoter. This is Scaffold attachment factor B1 (SAFB) from Pongo abelii (Sumatran orangutan).